Consider the following 228-residue polypeptide: MYDITEWKHVFKLDPNKDITDDQLEQLCESGTDAVLIGGSDHVTEDDVLRLMSKVRRFLVPCVLEVSTIDAIVPGFDLYFIPTVLNSRDTDWIAGLHKKAMKEYGELMSPEEIVVEGYCILNQDCKAAALTNADTELDIEDIKAYARVAEHLFRLPVFYLEYSGMLGDSETVKETKAVLQETTLFYGGGIKDAETAVKMAEHADVIVVGNAIYENFEEALKTVQAVKG.

Lys12 lines the sn-glycerol 1-phosphate pocket. Positions 14 and 40 each coordinate Mg(2+). Residues 159 to 164 (YLEYSG), Gly189, and 209 to 210 (GN) each bind sn-glycerol 1-phosphate.

The protein belongs to the GGGP/HepGP synthase family. Group I subfamily. Homodimer. Mg(2+) serves as cofactor.

It carries out the reaction sn-glycerol 1-phosphate + all-trans-heptaprenyl diphosphate = 3-heptaprenyl-sn-glycero-1-phosphate + diphosphate. The protein operates within membrane lipid metabolism; glycerophospholipid metabolism. Its function is as follows. Prenyltransferase that catalyzes in vivo the transfer of the heptaprenyl moiety of heptaprenyl pyrophosphate (HepPP; 35 carbon atoms) to the C3 hydroxyl of sn-glycerol-1-phosphate (G1P), producing heptaprenylglyceryl phosphate (HepGP). This reaction is an ether-bond-formation step in the biosynthesis of archaea-type G1P-based membrane lipids found in Bacillales. This is Heptaprenylglyceryl phosphate synthase from Bacillus licheniformis (strain ATCC 14580 / DSM 13 / JCM 2505 / CCUG 7422 / NBRC 12200 / NCIMB 9375 / NCTC 10341 / NRRL NRS-1264 / Gibson 46).